Consider the following 143-residue polypeptide: UPF0763 protein HH_0976 (143 aa).

It belongs to the UPF0763 family.

This Helicobacter hepaticus (strain ATCC 51449 / 3B1) protein is UPF0763 protein HH_0976.